The following is a 476-amino-acid chain: Glycogen synthase (476 aa).

ADP-alpha-D-glucose is bound at residue K15.

This sequence belongs to the glycosyltransferase 1 family. Bacterial/plant glycogen synthase subfamily.

It carries out the reaction [(1-&gt;4)-alpha-D-glucosyl](n) + ADP-alpha-D-glucose = [(1-&gt;4)-alpha-D-glucosyl](n+1) + ADP + H(+). It participates in glycan biosynthesis; glycogen biosynthesis. In terms of biological role, synthesizes alpha-1,4-glucan chains using ADP-glucose. The chain is Glycogen synthase from Streptococcus agalactiae serotype Ia (strain ATCC 27591 / A909 / CDC SS700).